A 583-amino-acid chain; its full sequence is CTP synthase (583 aa).

Residues 1–278 (MRRHPQTATK…DAFVVRRLNL (278 aa)) are amidoligase domain. A CTP-binding site is contributed by S20. Residue S20 participates in UTP binding. ATP is bound by residues 21-26 (SLGKGL) and D78. Mg(2+) contacts are provided by D78 and E152. CTP is bound by residues 159–161 (DIE), 199–204 (KTKPTQ), and K235. UTP-binding positions include 199–204 (KTKPTQ) and K235. Residues 303–551 (RIALVGKYVE…VKAAIDYKEG (249 aa)) enclose the Glutamine amidotransferase type-1 domain. G366 lines the L-glutamine pocket. C393 serves as the catalytic Nucleophile; for glutamine hydrolysis. L-glutamine contacts are provided by residues 394–397 (LGLQ), E416, and R477. Residues H524 and E526 contribute to the active site. Positions 559-583 (PERVSNGAERRDQVGQSIPEPANRG) are disordered.

This sequence belongs to the CTP synthase family. As to quaternary structure, homotetramer.

The catalysed reaction is UTP + L-glutamine + ATP + H2O = CTP + L-glutamate + ADP + phosphate + 2 H(+). The enzyme catalyses L-glutamine + H2O = L-glutamate + NH4(+). It catalyses the reaction UTP + NH4(+) + ATP = CTP + ADP + phosphate + 2 H(+). Its pathway is pyrimidine metabolism; CTP biosynthesis via de novo pathway; CTP from UDP: step 2/2. Allosterically activated by GTP, when glutamine is the substrate; GTP has no effect on the reaction when ammonia is the substrate. The allosteric effector GTP functions by stabilizing the protein conformation that binds the tetrahedral intermediate(s) formed during glutamine hydrolysis. Inhibited by the product CTP, via allosteric rather than competitive inhibition. Functionally, catalyzes the ATP-dependent amination of UTP to CTP with either L-glutamine or ammonia as the source of nitrogen. Regulates intracellular CTP levels through interactions with the four ribonucleotide triphosphates. In Mycobacterium marinum (strain ATCC BAA-535 / M), this protein is CTP synthase.